Consider the following 383-residue polypeptide: 8-amino-7-oxononanoate synthase (383 aa).

R21 contributes to the substrate binding site. 108 to 109 (GY) contacts pyridoxal 5'-phosphate. H133 contacts substrate. 3 residues coordinate pyridoxal 5'-phosphate: S179, H207, and T233. Position 236 is an N6-(pyridoxal phosphate)lysine (K236). T350 is a binding site for substrate.

This sequence belongs to the class-II pyridoxal-phosphate-dependent aminotransferase family. BioF subfamily. In terms of assembly, homodimer. Pyridoxal 5'-phosphate serves as cofactor.

It catalyses the reaction 6-carboxyhexanoyl-[ACP] + L-alanine + H(+) = (8S)-8-amino-7-oxononanoate + holo-[ACP] + CO2. Its pathway is cofactor biosynthesis; biotin biosynthesis. Its function is as follows. Catalyzes the decarboxylative condensation of pimeloyl-[acyl-carrier protein] and L-alanine to produce 8-amino-7-oxononanoate (AON), [acyl-carrier protein], and carbon dioxide. The protein is 8-amino-7-oxononanoate synthase of Yersinia pestis bv. Antiqua (strain Angola).